Reading from the N-terminus, the 72-residue chain is Large ribosomal subunit protein uL29 (72 aa).

This sequence belongs to the universal ribosomal protein uL29 family.

In Rhodopirellula baltica (strain DSM 10527 / NCIMB 13988 / SH1), this protein is Large ribosomal subunit protein uL29.